We begin with the raw amino-acid sequence, 350 residues long: Phosphotriesterase-related protein (350 aa).

Positions 22, 24, 169, 201, 230, and 298 each coordinate a divalent metal cation.

It belongs to the metallo-dependent hydrolases superfamily. Phosphotriesterase family. A divalent metal cation serves as cofactor.

This is Phosphotriesterase-related protein from Drosophila melanogaster (Fruit fly).